Reading from the N-terminus, the 137-residue chain is Ribosome-binding factor A (137 aa).

Residues 112–137 (KKDEVKEDESHEDESTDHTEETNEEP) are disordered. Basic and acidic residues predominate over residues 127–137 (TDHTEETNEEP).

This sequence belongs to the RbfA family. In terms of assembly, monomer. Binds 30S ribosomal subunits, but not 50S ribosomal subunits or 70S ribosomes.

It localises to the cytoplasm. In terms of biological role, one of several proteins that assist in the late maturation steps of the functional core of the 30S ribosomal subunit. Associates with free 30S ribosomal subunits (but not with 30S subunits that are part of 70S ribosomes or polysomes). Required for efficient processing of 16S rRNA. May interact with the 5'-terminal helix region of 16S rRNA. This chain is Ribosome-binding factor A, found in Coprothermobacter proteolyticus (strain ATCC 35245 / DSM 5265 / OCM 4 / BT).